Reading from the N-terminus, the 133-residue chain is Small ribosomal subunit protein uS11 (133 aa).

This sequence belongs to the universal ribosomal protein uS11 family. In terms of assembly, part of the 30S ribosomal subunit.

In terms of biological role, located on the platform of the 30S subunit. The polypeptide is Small ribosomal subunit protein uS11 (Hyperthermus butylicus (strain DSM 5456 / JCM 9403 / PLM1-5)).